Consider the following 547-residue polypeptide: Chaperonin GroEL (547 aa).

ATP-binding positions include 30–33 (TLGP), K51, 87–91 (DGTTT), G415, 479–481 (NAA), and D495. The tract at residues 525 to 547 (PKEDSPGAGAGMGGMGGMGGMDM) is disordered. Residues 532–547 (AGAGMGGMGGMGGMDM) show a composition bias toward gly residues.

The protein belongs to the chaperonin (HSP60) family. In terms of assembly, forms a cylinder of 14 subunits composed of two heptameric rings stacked back-to-back. Interacts with the co-chaperonin GroES.

It is found in the cytoplasm. The catalysed reaction is ATP + H2O + a folded polypeptide = ADP + phosphate + an unfolded polypeptide.. In terms of biological role, together with its co-chaperonin GroES, plays an essential role in assisting protein folding. The GroEL-GroES system forms a nano-cage that allows encapsulation of the non-native substrate proteins and provides a physical environment optimized to promote and accelerate protein folding. The chain is Chaperonin GroEL from Nitrosomonas eutropha (strain DSM 101675 / C91 / Nm57).